The chain runs to 546 residues: G1/S-specific cyclin CLN1 (546 aa).

The disordered stretch occupies residues 224–265; it reads SNGKEWSCKRKSQSSDDSDATVEEHISSSPQSTGLDGDTTTM.

The protein belongs to the cyclin family.

In terms of biological role, essential for the control of the cell cycle at the G1/S (start) transition. Interacts with the CDC28 protein kinase to form MPF. This is G1/S-specific cyclin CLN1 (CLN1) from Saccharomyces cerevisiae (strain ATCC 204508 / S288c) (Baker's yeast).